The sequence spans 253 residues: Imidazole glycerol phosphate synthase subunit HisF (253 aa).

Residues Asp-11 and Asp-130 contribute to the active site.

The protein belongs to the HisA/HisF family. As to quaternary structure, heterodimer of HisH and HisF.

The protein resides in the cytoplasm. The catalysed reaction is 5-[(5-phospho-1-deoxy-D-ribulos-1-ylimino)methylamino]-1-(5-phospho-beta-D-ribosyl)imidazole-4-carboxamide + L-glutamine = D-erythro-1-(imidazol-4-yl)glycerol 3-phosphate + 5-amino-1-(5-phospho-beta-D-ribosyl)imidazole-4-carboxamide + L-glutamate + H(+). The protein operates within amino-acid biosynthesis; L-histidine biosynthesis; L-histidine from 5-phospho-alpha-D-ribose 1-diphosphate: step 5/9. Functionally, IGPS catalyzes the conversion of PRFAR and glutamine to IGP, AICAR and glutamate. The HisF subunit catalyzes the cyclization activity that produces IGP and AICAR from PRFAR using the ammonia provided by the HisH subunit. The chain is Imidazole glycerol phosphate synthase subunit HisF from Acidithiobacillus ferrooxidans (strain ATCC 23270 / DSM 14882 / CIP 104768 / NCIMB 8455) (Ferrobacillus ferrooxidans (strain ATCC 23270)).